We begin with the raw amino-acid sequence, 199 residues long: Nucleoside triphosphate pyrophosphatase (199 aa).

Residue D76 is the Proton acceptor of the active site.

The protein belongs to the Maf family. It depends on a divalent metal cation as a cofactor.

Its subcellular location is the cytoplasm. It carries out the reaction a ribonucleoside 5'-triphosphate + H2O = a ribonucleoside 5'-phosphate + diphosphate + H(+). The catalysed reaction is a 2'-deoxyribonucleoside 5'-triphosphate + H2O = a 2'-deoxyribonucleoside 5'-phosphate + diphosphate + H(+). Nucleoside triphosphate pyrophosphatase. May have a dual role in cell division arrest and in preventing the incorporation of modified nucleotides into cellular nucleic acids. The polypeptide is Nucleoside triphosphate pyrophosphatase (Ruegeria sp. (strain TM1040) (Silicibacter sp.)).